We begin with the raw amino-acid sequence, 388 residues long: Mannitol-1-phosphate 5-dehydrogenase (388 aa).

5–16 provides a ligand contact to NAD(+); it reads AIQFGGGNIGRG. Residue K213 is part of the active site.

It belongs to the mannitol dehydrogenase family. Monomer.

It catalyses the reaction D-mannitol 1-phosphate + NAD(+) = beta-D-fructose 6-phosphate + NADH + H(+). Catalyzes the NAD(H)-dependent interconversion of D-fructose 6-phosphate and D-mannitol 1-phosphate in the mannitol metabolic pathway. In Aspergillus clavatus (strain ATCC 1007 / CBS 513.65 / DSM 816 / NCTC 3887 / NRRL 1 / QM 1276 / 107), this protein is Mannitol-1-phosphate 5-dehydrogenase (mpdA).